A 446-amino-acid polypeptide reads, in one-letter code: NAD kinase (446 aa).

A phosphoserine mark is found at S46, S48, S50, S55, and S64.

It belongs to the NAD kinase family. A divalent metal cation serves as cofactor. As to expression, widely expressed but not detected in skeletal muscle.

The catalysed reaction is NAD(+) + ATP = ADP + NADP(+) + H(+). This chain is NAD kinase (NADK), found in Homo sapiens (Human).